The following is a 104-amino-acid chain: MAAKIRREDEVIVLTGKDKGKRGKVTRVLVTGKVVVEGINLVKKHTKPNPQLGITGGIVEKEAAIQVSNVAIFNPATGKADRVGFRFEDGKKVRFFKSNGELVK.

It belongs to the universal ribosomal protein uL24 family. Part of the 50S ribosomal subunit.

In terms of biological role, one of two assembly initiator proteins, it binds directly to the 5'-end of the 23S rRNA, where it nucleates assembly of the 50S subunit. One of the proteins that surrounds the polypeptide exit tunnel on the outside of the subunit. This chain is Large ribosomal subunit protein uL24, found in Shewanella amazonensis (strain ATCC BAA-1098 / SB2B).